A 399-amino-acid polypeptide reads, in one-letter code: Enoyl-[acyl-carrier-protein] reductase [NADH] (399 aa).

NAD(+) is bound by residues 48-53 (GASTGY), 74-75 (FE), 111-112 (DA), and 139-140 (LA). Tyrosine 225 provides a ligand contact to substrate. Residue tyrosine 235 is the Proton donor of the active site. NAD(+)-binding positions include lysine 244 and 274 to 276 (VVT).

Belongs to the TER reductase family. In terms of assembly, monomer.

The enzyme catalyses a 2,3-saturated acyl-[ACP] + NAD(+) = a (2E)-enoyl-[ACP] + NADH + H(+). Its pathway is lipid metabolism; fatty acid biosynthesis. Involved in the final reduction of the elongation cycle of fatty acid synthesis (FAS II). Catalyzes the reduction of a carbon-carbon double bond in an enoyl moiety that is covalently linked to an acyl carrier protein (ACP). This chain is Enoyl-[acyl-carrier-protein] reductase [NADH], found in Yersinia pestis bv. Antiqua (strain Antiqua).